A 320-amino-acid chain; its full sequence is NADH-ubiquinone oxidoreductase chain 1 (320 aa).

The next 8 membrane-spanning stretches (helical) occupy residues 3–23 (LITI…VAFL), 72–92 (ILLI…WTPI), 103–123 (LGFL…LWAG), 147–167 (VTLG…TMQL), 174–194 (HIWL…STLA), 226–246 (FFLA…ILFI), 255–275 (ELFL…FLWI), and 295–315 (FLPL…SISG).

The protein belongs to the complex I subunit 1 family.

The protein localises to the mitochondrion inner membrane. It carries out the reaction a ubiquinone + NADH + 5 H(+)(in) = a ubiquinol + NAD(+) + 4 H(+)(out). Core subunit of the mitochondrial membrane respiratory chain NADH dehydrogenase (Complex I) that is believed to belong to the minimal assembly required for catalysis. Complex I functions in the transfer of electrons from NADH to the respiratory chain. The immediate electron acceptor for the enzyme is believed to be ubiquinone. This chain is NADH-ubiquinone oxidoreductase chain 1 (MT-ND1), found in Varanus jobiensis (Peach throat monitor).